The primary structure comprises 418 residues: Dual-specificity RNA methyltransferase RlmN (418 aa).

The tract at residues 1 to 21 is disordered; sequence MADTSLMPIPGQVDPVPAPRD. Glu-122 serves as the catalytic Proton acceptor. The region spanning 128 to 383 is the Radical SAM core domain; that stretch reads DADRGTLCVS…APVRTPRGRD (256 aa). Cys-135 and Cys-388 are disulfide-bonded. Residues Cys-142, Cys-146, and Cys-149 each coordinate [4Fe-4S] cluster. S-adenosyl-L-methionine is bound by residues 212 to 213, Ser-244, 266 to 268, and Asn-345; these read GE and SLH. Cys-388 functions as the S-methylcysteine intermediate in the catalytic mechanism. A disordered region spans residues 393-418; that stretch reads TAAQKKSRAERDREAAAEAEAAASQA. The span at 399–408 shows a compositional bias: basic and acidic residues; that stretch reads SRAERDREAA.

The protein belongs to the radical SAM superfamily. RlmN family. [4Fe-4S] cluster is required as a cofactor.

It localises to the cytoplasm. It catalyses the reaction adenosine(2503) in 23S rRNA + 2 reduced [2Fe-2S]-[ferredoxin] + 2 S-adenosyl-L-methionine = 2-methyladenosine(2503) in 23S rRNA + 5'-deoxyadenosine + L-methionine + 2 oxidized [2Fe-2S]-[ferredoxin] + S-adenosyl-L-homocysteine. It carries out the reaction adenosine(37) in tRNA + 2 reduced [2Fe-2S]-[ferredoxin] + 2 S-adenosyl-L-methionine = 2-methyladenosine(37) in tRNA + 5'-deoxyadenosine + L-methionine + 2 oxidized [2Fe-2S]-[ferredoxin] + S-adenosyl-L-homocysteine. Functionally, specifically methylates position 2 of adenine 2503 in 23S rRNA and position 2 of adenine 37 in tRNAs. m2A2503 modification seems to play a crucial role in the proofreading step occurring at the peptidyl transferase center and thus would serve to optimize ribosomal fidelity. This chain is Dual-specificity RNA methyltransferase RlmN, found in Erythrobacter litoralis (strain HTCC2594).